Consider the following 145-residue polypeptide: MVYSKTFRVEEKSITVSARGTIGVVFYRDFAYLPAVSLICFVPKEEFDIRFLFHALRAIKFKKQGSATGQLTVAQFKEYGIHVPSLKKQKEIAAILDPLYSFFTDLNEGLPAEIELRKKQLDYYQNFLFNWIQKQKELVEQASTN.

The protein belongs to the type-I restriction system S methylase family. In terms of assembly, the methyltransferase is composed of M and S polypeptides.

In terms of biological role, the C-terminal section of a specificity (S) subunit of a type I methyltransferase (MTase); this subunit dictates DNA sequence specificity. The single R subunit has multiple frameshifts and is probably not expressed. The chain is Putative type I specificity subunit S.MpnORF289P C-terminus from Mycoplasma pneumoniae (strain ATCC 29342 / M129 / Subtype 1) (Mycoplasmoides pneumoniae).